Consider the following 973-residue polypeptide: ATP-dependent DNA helicase Q5 (973 aa).

The region spanning 39–213 is the Helicase ATP-binding domain; sequence MAVVKGDKDV…FAALHLKQPV (175 aa). Residue 52–59 participates in ATP binding; sequence MPTGAGKS. Positions 157–160 match the DEAH box motif; it reads DEAH. In terms of domain architecture, Helicase C-terminal spans 241–398; sequence NLRDFCLKAL…NKPSDKATLL (158 aa). Cys-412, Cys-428, Cys-432, and Cys-435 together coordinate Zn(2+). 2 positions are modified to phosphoserine: Ser-489 and Ser-492. Residues 491 to 621 are interaction with POLR2A; sequence GSGDEGRDEA…ASKDGQLYDM (131 aa). Disordered regions lie at residues 518–538, 679–795, and 822–884; these read GKEA…LRDA, TEKL…VPGK, and CSLE…AREP. The residue at position 527 (Thr-527) is a Phosphothreonine. The tract at residues 653-726 is interaction with RAD51; sequence PKRVGAGFSK…APGSRTNCGD (74 aa). At Ser-728 the chain carries Phosphoserine; by CDK1. Over residues 840-856 the composition is skewed to basic and acidic residues; it reads TQAEKRPRPQQESQEKR. Positions 863–878 are enriched in polar residues; the sequence is PSTNSSALASDPSTEN.

This sequence belongs to the helicase family. RecQ subfamily. Monomer. Interacts with TOP2A, TOP3A and TOP3B. Interacts with RNA polymerase II subunit POLR2A. Identified in a complex with the RNA polymerase II core bound to DNA. Interacts with RAD51. Interacts with WRN; this interaction stimulates WRN helicase activity on DNA fork duplexes. Interacts with MUS1; this interaction promotes MUS81-dependent mitotic DNA synthesis. The cofactor is Zn(2+). Phosphorylated by CDK1 at Ser-728; this phosphorylation is required for RECQL5-mediated disruption of RAD51 filaments on stalled replication forks.

Its subcellular location is the nucleus. The protein localises to the nucleoplasm. It carries out the reaction Couples ATP hydrolysis with the unwinding of duplex DNA by translocating in the 3'-5' direction.. It catalyses the reaction ATP + H2O = ADP + phosphate + H(+). DNA helicase that plays an important role in DNA replication, transcription and repair. Binds to the RNA polymerase II subunit POLR2A during transcription elongation and suppresses transcription-associated genomic instability. Also associates with POLR1A and enforces the stability of ribosomal DNA arrays. Plays an important role in mitotic chromosome separation after cross-over events and cell cycle progress. Mechanistically, removes RAD51 filaments protecting stalled replication forks at common fragile sites and stimulates MUS81-EME1 endonuclease leading to mitotic DNA synthesis. Required for efficient DNA repair, including repair of inter-strand cross-links. Stimulates DNA decatenation mediated by TOP2A. Prevents sister chromatid exchange and homologous recombination. This Rattus norvegicus (Rat) protein is ATP-dependent DNA helicase Q5 (Recql5).